A 287-amino-acid chain; its full sequence is Elongation factor Ts (287 aa).

Residues Thr80–Leu83 are involved in Mg(2+) ion dislocation from EF-Tu.

The protein belongs to the EF-Ts family.

The protein resides in the cytoplasm. In terms of biological role, associates with the EF-Tu.GDP complex and induces the exchange of GDP to GTP. It remains bound to the aminoacyl-tRNA.EF-Tu.GTP complex up to the GTP hydrolysis stage on the ribosome. In Pseudomonas entomophila (strain L48), this protein is Elongation factor Ts.